Reading from the N-terminus, the 327-residue chain is DNA-directed RNA polymerase subunit alpha (327 aa).

Residues 1-233 (MVREKVKVST…NLFIPFLHVE (233 aa)) form an alpha N-terminal domain (alpha-NTD) region. The tract at residues 266-327 (EQGFQYIFID…KKILDILEKK (62 aa)) is alpha C-terminal domain (alpha-CTD).

It belongs to the RNA polymerase alpha chain family. In plastids the minimal PEP RNA polymerase catalytic core is composed of four subunits: alpha, beta, beta', and beta''. When a (nuclear-encoded) sigma factor is associated with the core the holoenzyme is formed, which can initiate transcription.

The protein localises to the plastid. The protein resides in the chloroplast. The enzyme catalyses RNA(n) + a ribonucleoside 5'-triphosphate = RNA(n+1) + diphosphate. Functionally, DNA-dependent RNA polymerase catalyzes the transcription of DNA into RNA using the four ribonucleoside triphosphates as substrates. This chain is DNA-directed RNA polymerase subunit alpha, found in Barbarea verna (Land cress).